A 374-amino-acid chain; its full sequence is Putative phosphoserine aminotransferase (374 aa).

Arg-48 contacts L-glutamate. Pyridoxal 5'-phosphate contacts are provided by residues Ala-82–Thr-83, Phe-106, Thr-152, Asp-174, and Gln-197. At Lys-198 the chain carries N6-(pyridoxal phosphate)lysine. Asn-249–Thr-250 is a pyridoxal 5'-phosphate binding site.

The protein belongs to the class-V pyridoxal-phosphate-dependent aminotransferase family. SerC subfamily. In terms of assembly, homodimer. Requires pyridoxal 5'-phosphate as cofactor.

Its subcellular location is the cytoplasm. The enzyme catalyses O-phospho-L-serine + 2-oxoglutarate = 3-phosphooxypyruvate + L-glutamate. It carries out the reaction 4-(phosphooxy)-L-threonine + 2-oxoglutarate = (R)-3-hydroxy-2-oxo-4-phosphooxybutanoate + L-glutamate. It participates in amino-acid biosynthesis; L-serine biosynthesis; L-serine from 3-phospho-D-glycerate: step 2/3. Its pathway is cofactor biosynthesis; pyridoxine 5'-phosphate biosynthesis; pyridoxine 5'-phosphate from D-erythrose 4-phosphate: step 3/5. Functionally, catalyzes the reversible conversion of 3-phosphohydroxypyruvate to phosphoserine and of 3-hydroxy-2-oxo-4-phosphonooxybutanoate to phosphohydroxythreonine. In Mycolicibacterium paratuberculosis (strain ATCC BAA-968 / K-10) (Mycobacterium paratuberculosis), this protein is Putative phosphoserine aminotransferase.